Consider the following 112-residue polypeptide: UPF0145 protein CD630_17110 (112 aa).

Belongs to the UPF0145 family.

The sequence is that of UPF0145 protein CD630_17110 from Clostridioides difficile (strain 630) (Peptoclostridium difficile).